A 209-amino-acid chain; its full sequence is Mitotic spindle checkpoint protein MAD2 (209 aa).

The HORMA domain maps to 15–198 (HGSAAIVSEF…TKIHKVDTLV (184 aa)).

It belongs to the MAD2 family. Part of the mitotic checkpoint complex (MCC); interacts with MAD1, CDC20-1, CDC20-2 and CDC20-5. Interacts with BUBR1 at chromocenters and with BUB3.1. Interacts with EIF4B3. As to expression, expressed in actively dividing tissues, early in organ development, in young leaves, lateral root primordia and root meristems.

The protein resides in the nucleus. It localises to the nucleus envelope. Its subcellular location is the chromosome. The protein localises to the centromere. It is found in the kinetochore. The protein resides in the cytoplasm. It localises to the cytoskeleton. Its subcellular location is the spindle. Required for the execution of the mitotic checkpoint which monitors the process of kinetochore-spindle attachment and delays the onset of anaphase when this process is not complete. It inhibits the activity of the anaphase promoting complex by sequestering CDC20 until all chromosomes are aligned at the metaphase plate. This chain is Mitotic spindle checkpoint protein MAD2, found in Arabidopsis thaliana (Mouse-ear cress).